A 73-amino-acid chain; its full sequence is DNA-directed RNA polymerase subunit epsilon (73 aa).

Belongs to the RNA polymerase subunit epsilon family. In terms of assembly, RNAP is composed of a core of 2 alpha, a beta and a beta' subunit. The core is associated with a delta subunit, and at least one of epsilon or omega. When a sigma factor is associated with the core the holoenzyme is formed, which can initiate transcription.

It catalyses the reaction RNA(n) + a ribonucleoside 5'-triphosphate = RNA(n+1) + diphosphate. In terms of biological role, a non-essential component of RNA polymerase (RNAP). In Lactobacillus helveticus (strain DPC 4571), this protein is DNA-directed RNA polymerase subunit epsilon.